Here is a 272-residue protein sequence, read N- to C-terminus: Putative phosphoenolpyruvate synthase regulatory protein (272 aa).

Residue 152-159 participates in ADP binding; sequence GVSRSGKT.

This sequence belongs to the pyruvate, phosphate/water dikinase regulatory protein family. PSRP subfamily.

It catalyses the reaction [pyruvate, water dikinase] + ADP = [pyruvate, water dikinase]-phosphate + AMP + H(+). The enzyme catalyses [pyruvate, water dikinase]-phosphate + phosphate + H(+) = [pyruvate, water dikinase] + diphosphate. Bifunctional serine/threonine kinase and phosphorylase involved in the regulation of the phosphoenolpyruvate synthase (PEPS) by catalyzing its phosphorylation/dephosphorylation. In Alcanivorax borkumensis (strain ATCC 700651 / DSM 11573 / NCIMB 13689 / SK2), this protein is Putative phosphoenolpyruvate synthase regulatory protein.